The following is a 229-amino-acid chain: GTP cyclohydrolase 1 (229 aa).

A disordered region spans residues 1–26; it reads MDAKIKPIRGTNPAEGRPEFQPAELE. The Zn(2+) site is built by cysteine 118, histidine 121, and cysteine 189.

The protein belongs to the GTP cyclohydrolase I family. Toroid-shaped homodecamer, composed of two pentamers of five dimers.

The catalysed reaction is GTP + H2O = 7,8-dihydroneopterin 3'-triphosphate + formate + H(+). It participates in cofactor biosynthesis; 7,8-dihydroneopterin triphosphate biosynthesis; 7,8-dihydroneopterin triphosphate from GTP: step 1/1. The polypeptide is GTP cyclohydrolase 1 (Rhodopseudomonas palustris (strain ATCC BAA-98 / CGA009)).